The primary structure comprises 282 residues: Release factor glutamine methyltransferase (282 aa).

3 residues coordinate S-adenosyl-L-methionine: D141, F169, and N186. 186–189 (NPPY) is a binding site for substrate.

Belongs to the protein N5-glutamine methyltransferase family. PrmC subfamily.

It carries out the reaction L-glutaminyl-[peptide chain release factor] + S-adenosyl-L-methionine = N(5)-methyl-L-glutaminyl-[peptide chain release factor] + S-adenosyl-L-homocysteine + H(+). Methylates the class 1 translation termination release factors RF1/PrfA and RF2/PrfB on the glutamine residue of the universally conserved GGQ motif. This chain is Release factor glutamine methyltransferase, found in Mycoplasma mycoides subsp. mycoides SC (strain CCUG 32753 / NCTC 10114 / PG1).